A 329-amino-acid chain; its full sequence is Pantothenate kinase (329 aa).

Residues 1–21 (MISPVPSIPRSAHRQRPEATP) are disordered. Position 107 to 114 (107 to 114 (GSVAVGKS)) interacts with ATP.

It belongs to the prokaryotic pantothenate kinase family.

Its subcellular location is the cytoplasm. The catalysed reaction is (R)-pantothenate + ATP = (R)-4'-phosphopantothenate + ADP + H(+). The protein operates within cofactor biosynthesis; coenzyme A biosynthesis; CoA from (R)-pantothenate: step 1/5. The polypeptide is Pantothenate kinase (coaA) (Streptomyces coelicolor (strain ATCC BAA-471 / A3(2) / M145)).